A 127-amino-acid chain; its full sequence is uncharacterized protein (127 aa).

This is an uncharacterized protein from Bacillus subtilis (strain 168).